The primary structure comprises 232 residues: Ribose-5-phosphate isomerase A (232 aa).

Substrate-binding positions include T34 to T37, D89 to D92, and K102 to G105. Catalysis depends on E111, which acts as the Proton acceptor. K129 provides a ligand contact to substrate.

The protein belongs to the ribose 5-phosphate isomerase family. Homodimer.

The enzyme catalyses aldehydo-D-ribose 5-phosphate = D-ribulose 5-phosphate. It participates in carbohydrate degradation; pentose phosphate pathway; D-ribose 5-phosphate from D-ribulose 5-phosphate (non-oxidative stage): step 1/1. Its function is as follows. Catalyzes the reversible conversion of ribose-5-phosphate to ribulose 5-phosphate. This is Ribose-5-phosphate isomerase A from Protochlamydia amoebophila (strain UWE25).